Consider the following 215-residue polypeptide: Pyridoxine/pyridoxamine 5'-phosphate oxidase (215 aa).

Substrate is bound by residues arginine 9–tyrosine 12 and lysine 69. FMN-binding positions include arginine 64–lysine 69, phenylalanine 79–threonine 80, lysine 86, and glutamine 108. 3 residues coordinate substrate: tyrosine 126, arginine 130, and serine 134. Residues glutamine 143 to serine 144 and tryptophan 188 each bind FMN. Arginine 194 to histidine 196 contributes to the substrate binding site. An FMN-binding site is contributed by arginine 198.

It belongs to the pyridoxamine 5'-phosphate oxidase family. As to quaternary structure, homodimer. It depends on FMN as a cofactor.

The enzyme catalyses pyridoxamine 5'-phosphate + O2 + H2O = pyridoxal 5'-phosphate + H2O2 + NH4(+). It catalyses the reaction pyridoxine 5'-phosphate + O2 = pyridoxal 5'-phosphate + H2O2. It functions in the pathway cofactor metabolism; pyridoxal 5'-phosphate salvage; pyridoxal 5'-phosphate from pyridoxamine 5'-phosphate: step 1/1. Its pathway is cofactor metabolism; pyridoxal 5'-phosphate salvage; pyridoxal 5'-phosphate from pyridoxine 5'-phosphate: step 1/1. Catalyzes the oxidation of either pyridoxine 5'-phosphate (PNP) or pyridoxamine 5'-phosphate (PMP) into pyridoxal 5'-phosphate (PLP). The polypeptide is Pyridoxine/pyridoxamine 5'-phosphate oxidase (Pseudomonas putida (strain GB-1)).